The following is a 564-amino-acid chain: Dihydroxy-acid dehydratase (564 aa).

Cys53 is a binding site for [2Fe-2S] cluster. Asp85 contacts Mg(2+). Cys126 lines the [2Fe-2S] cluster pocket. Residues Asp127 and Lys128 each contribute to the Mg(2+) site. Position 128 is an N6-carboxylysine (Lys128). Position 203 (Cys203) interacts with [2Fe-2S] cluster. Glu454 lines the Mg(2+) pocket. Ser480 serves as the catalytic Proton acceptor.

Belongs to the IlvD/Edd family. Homodimer. [2Fe-2S] cluster is required as a cofactor. Requires Mg(2+) as cofactor.

It catalyses the reaction (2R)-2,3-dihydroxy-3-methylbutanoate = 3-methyl-2-oxobutanoate + H2O. It carries out the reaction (2R,3R)-2,3-dihydroxy-3-methylpentanoate = (S)-3-methyl-2-oxopentanoate + H2O. It functions in the pathway amino-acid biosynthesis; L-isoleucine biosynthesis; L-isoleucine from 2-oxobutanoate: step 3/4. It participates in amino-acid biosynthesis; L-valine biosynthesis; L-valine from pyruvate: step 3/4. Its function is as follows. Functions in the biosynthesis of branched-chain amino acids. Catalyzes the dehydration of (2R,3R)-2,3-dihydroxy-3-methylpentanoate (2,3-dihydroxy-3-methylvalerate) into 2-oxo-3-methylpentanoate (2-oxo-3-methylvalerate) and of (2R)-2,3-dihydroxy-3-methylbutanoate (2,3-dihydroxyisovalerate) into 2-oxo-3-methylbutanoate (2-oxoisovalerate), the penultimate precursor to L-isoleucine and L-valine, respectively. This chain is Dihydroxy-acid dehydratase, found in Mycobacterium ulcerans (strain Agy99).